The chain runs to 93 residues: Protein S100-A5 (93 aa).

2 EF-hand domains span residues 12–47 (MVTTFHKYSGREGSKLTLSRKELKELIKTELSLAEK) and 48–83 (MKESSIDNLMKSLDKNSDQEIDFKEYSVFLTTLCMA). Residues threonine 28, glutamate 33, aspartate 61, asparagine 63, aspartate 65, glutamate 67, and glutamate 72 each coordinate Ca(2+).

Belongs to the S-100 family. In terms of assembly, homodimer.

Its function is as follows. Binds calcium, zinc and copper. One subunit can simultaneously bind 2 calcium ions or 2 copper ions plus 1 zinc ion. Calcium and copper ions compete for the same binding sites. The protein is Protein S100-A5 (S100a5) of Mus musculus (Mouse).